The following is a 326-amino-acid chain: Protoheme IX farnesyltransferase (326 aa).

8 consecutive transmembrane segments (helical) span residues 35–55, 60–80, 106–126, 129–149, 157–177, 185–205, 238–258, and 289–309; these read LIPL…GWPL, LICT…LNCL, TAFI…VSGV, LAAG…TALL, IVVG…AATG, WLFA…ALLL, VLLS…YGLM, and WSIL…SALA.

Belongs to the UbiA prenyltransferase family. Protoheme IX farnesyltransferase subfamily.

The protein resides in the cell inner membrane. The catalysed reaction is heme b + (2E,6E)-farnesyl diphosphate + H2O = Fe(II)-heme o + diphosphate. Its pathway is porphyrin-containing compound metabolism; heme O biosynthesis; heme O from protoheme: step 1/1. Functionally, converts heme B (protoheme IX) to heme O by substitution of the vinyl group on carbon 2 of heme B porphyrin ring with a hydroxyethyl farnesyl side group. The polypeptide is Protoheme IX farnesyltransferase (Synechococcus sp. (strain CC9902)).